We begin with the raw amino-acid sequence, 353 residues long: Probable dual-specificity RNA methyltransferase RlmN (353 aa).

Glutamate 104 (proton acceptor) is an active-site residue. Positions 112–341 constitute a Radical SAM core domain; the sequence is DGGRKTICIS…ILNRRSPGKD (230 aa). Residues cysteine 119 and cysteine 346 are joined by a disulfide bond. Positions 126, 130, and 133 each coordinate [4Fe-4S] cluster. S-adenosyl-L-methionine-binding positions include 173–174, serine 205, 228–230, and asparagine 304; these read GE and SLN. Cysteine 346 functions as the S-methylcysteine intermediate in the catalytic mechanism.

The protein belongs to the radical SAM superfamily. RlmN family. The cofactor is [4Fe-4S] cluster.

It is found in the cytoplasm. It carries out the reaction adenosine(2503) in 23S rRNA + 2 reduced [2Fe-2S]-[ferredoxin] + 2 S-adenosyl-L-methionine = 2-methyladenosine(2503) in 23S rRNA + 5'-deoxyadenosine + L-methionine + 2 oxidized [2Fe-2S]-[ferredoxin] + S-adenosyl-L-homocysteine. The catalysed reaction is adenosine(37) in tRNA + 2 reduced [2Fe-2S]-[ferredoxin] + 2 S-adenosyl-L-methionine = 2-methyladenosine(37) in tRNA + 5'-deoxyadenosine + L-methionine + 2 oxidized [2Fe-2S]-[ferredoxin] + S-adenosyl-L-homocysteine. In terms of biological role, specifically methylates position 2 of adenine 2503 in 23S rRNA and position 2 of adenine 37 in tRNAs. The protein is Probable dual-specificity RNA methyltransferase RlmN of Leptospira interrogans serogroup Icterohaemorrhagiae serovar copenhageni (strain Fiocruz L1-130).